The chain runs to 243 residues: Triosephosphate isomerase (243 aa).

Substrate is bound at residue 9 to 11 (NWK). H96 functions as the Electrophile in the catalytic mechanism. The active-site Proton acceptor is E165. Substrate contacts are provided by residues G171, S204, and 225–226 (GG).

It belongs to the triosephosphate isomerase family. Homodimer.

It is found in the cytoplasm. The enzyme catalyses D-glyceraldehyde 3-phosphate = dihydroxyacetone phosphate. It participates in carbohydrate biosynthesis; gluconeogenesis. The protein operates within carbohydrate degradation; glycolysis; D-glyceraldehyde 3-phosphate from glycerone phosphate: step 1/1. Functionally, involved in the gluconeogenesis. Catalyzes stereospecifically the conversion of dihydroxyacetone phosphate (DHAP) to D-glyceraldehyde-3-phosphate (G3P). The chain is Triosephosphate isomerase from Synechococcus sp. (strain CC9311).